The sequence spans 106 residues: uncharacterized protein (106 aa).

Residues 38–106 (KGNKKSKAAT…STHLPYHGSY (69 aa)) are disordered. Composition is skewed to basic and acidic residues over residues 57–71 (TRQERDLTDRKHRPE) and 82–96 (WKKEVTTRSRPKETS).

The protein resides in the mitochondrion. This is an uncharacterized protein from Arabidopsis thaliana (Mouse-ear cress).